The primary structure comprises 324 residues: tRNA U34 carboxymethyltransferase (324 aa).

Residues Lys-92, Trp-106, Lys-111, Gly-131, 153–155, 181–182, Met-197, Tyr-201, and Arg-316 contribute to the carboxy-S-adenosyl-L-methionine site; these read DPT and IE.

The protein belongs to the class I-like SAM-binding methyltransferase superfamily. CmoB family. Homotetramer.

It catalyses the reaction carboxy-S-adenosyl-L-methionine + 5-hydroxyuridine(34) in tRNA = 5-carboxymethoxyuridine(34) in tRNA + S-adenosyl-L-homocysteine + H(+). Catalyzes carboxymethyl transfer from carboxy-S-adenosyl-L-methionine (Cx-SAM) to 5-hydroxyuridine (ho5U) to form 5-carboxymethoxyuridine (cmo5U) at position 34 in tRNAs. The sequence is that of tRNA U34 carboxymethyltransferase from Methylococcus capsulatus (strain ATCC 33009 / NCIMB 11132 / Bath).